A 464-amino-acid chain; its full sequence is MRIKIKDILISSKDVKFVGNIKNIERVVSFYSLDSREIKDDNINDSLYFAYKGNKVDGFSFVKYLIDLGVKCFACSREHESECIKYLNDNEGLVFLLTSNVIKLLQALASFLIEKTSFKRIAITGSNGKTTTKEMLYSILSKKYKTYKTWGNLNSDIGLPLSILRVEGNEEYAVFEVGVSYVGEMDLLSQILKPEIVIITNISYAHMQAFKELQAIAFEKSKIIGKNIEIFVVNEMNDYCVYLEKRAKIANPNVKIVYFDFENLSIKSFSFLDGKFSFDFVYKGFEYSILLLGRHNIFNAIGCINLALFLGMREKEIKEGLIETAFQKGRAEILTKNGYLILNDSYNGNMGSFMALKNMILDLNIQNKKFIVLGSFKELGELAYKTHKDLIQEAISMNFDKIFLIGEEFLDVRDSENLVEKCLYYFSEFDKFIDFFLKSLEPSVFIVIKGSRFNRLERILNIFR.

Position 125-131 (125-131 (GSNGKTT)) interacts with ATP.

This sequence belongs to the MurCDEF family. MurF subfamily.

The protein resides in the cytoplasm. It carries out the reaction D-alanyl-D-alanine + UDP-N-acetyl-alpha-D-muramoyl-L-alanyl-gamma-D-glutamyl-meso-2,6-diaminopimelate + ATP = UDP-N-acetyl-alpha-D-muramoyl-L-alanyl-gamma-D-glutamyl-meso-2,6-diaminopimeloyl-D-alanyl-D-alanine + ADP + phosphate + H(+). It functions in the pathway cell wall biogenesis; peptidoglycan biosynthesis. Involved in cell wall formation. Catalyzes the final step in the synthesis of UDP-N-acetylmuramoyl-pentapeptide, the precursor of murein. The chain is UDP-N-acetylmuramoyl-tripeptide--D-alanyl-D-alanine ligase from Borreliella burgdorferi (strain ATCC 35210 / DSM 4680 / CIP 102532 / B31) (Borrelia burgdorferi).